Consider the following 312-residue polypeptide: 2,3-dihydroxyphenylpropionate/2,3-dihydroxicinnamic acid 1,2-dioxygenase (312 aa).

Residue His115 is the Proton donor of the active site. Catalysis depends on His179, which acts as the Proton acceptor.

The protein belongs to the LigB/MhpB extradiol dioxygenase family. As to quaternary structure, homotetramer. The cofactor is Fe(2+).

It carries out the reaction 3-(2,3-dihydroxyphenyl)propanoate + O2 = (2Z,4E)-2-hydroxy-6-oxonona-2,4-dienedioate + H(+). It catalyses the reaction (2E)-3-(2,3-dihydroxyphenyl)prop-2-enoate + O2 = (2Z,4E,7E)-2-hydroxy-6-oxonona-2,4,7-trienedioate + H(+). It participates in aromatic compound metabolism; 3-phenylpropanoate degradation. Its function is as follows. Catalyzes the non-heme iron(II)-dependent oxidative cleavage of 2,3-dihydroxyphenylpropionic acid and 2,3-dihydroxicinnamic acid into 2-hydroxy-6-ketononadienedioate and 2-hydroxy-6-ketononatrienedioate, respectively. This Azotobacter vinelandii (strain DJ / ATCC BAA-1303) protein is 2,3-dihydroxyphenylpropionate/2,3-dihydroxicinnamic acid 1,2-dioxygenase.